An 87-amino-acid polypeptide reads, in one-letter code: Large ribosomal subunit protein bL27 (87 aa).

The tract at residues 1–21 (MAHKKAGGSSRNGRDSESKRL) is disordered.

It belongs to the bacterial ribosomal protein bL27 family.

The chain is Large ribosomal subunit protein bL27 from Burkholderia mallei (strain NCTC 10247).